Here is a 146-residue protein sequence, read N- to C-terminus: Hemoglobin subunit beta-2 (146 aa).

The 145-residue stretch at 2–146 (EWTDFERATI…VVSSLGRQYH (145 aa)) folds into the Globin domain. The heme b site is built by His63 and His92.

It belongs to the globin family. In terms of assembly, hb 2 is a heterotetramer of two alpha-2 and two beta-2 chains. In terms of tissue distribution, red blood cells.

In terms of biological role, involved in oxygen transport from gills to the various peripheral tissues. The chain is Hemoglobin subunit beta-2 (hbb2) from Gobionotothen gibberifrons (Humped rockcod).